The following is a 354-amino-acid chain: Tryptophan--tRNA ligase (354 aa).

ATP is bound by residues 13 to 15 (QPT) and 21 to 22 (GN). The 'HIGH' region signature appears at 14–22 (PTGNLHLGN). D137 serves as a coordination point for L-tryptophan. Residues 149–151 (GDD), V208, and 217–221 (KMSKS) contribute to the ATP site. Positions 217 to 221 (KMSKS) match the 'KMSKS' region motif.

This sequence belongs to the class-I aminoacyl-tRNA synthetase family. Homodimer.

It localises to the cytoplasm. It carries out the reaction tRNA(Trp) + L-tryptophan + ATP = L-tryptophyl-tRNA(Trp) + AMP + diphosphate + H(+). Functionally, catalyzes the attachment of tryptophan to tRNA(Trp). This chain is Tryptophan--tRNA ligase, found in Agrobacterium fabrum (strain C58 / ATCC 33970) (Agrobacterium tumefaciens (strain C58)).